Here is a 603-residue protein sequence, read N- to C-terminus: NADPH-dependent diflavin oxidoreductase 1 (603 aa).

A Flavodoxin-like domain is found at 8–152 (VLVLYGSETG…SFVRWTGRLY (145 aa)). FMN is bound by residues 14–19 (SETGNA), 61–64 (STTG), 99–108 (LGDSTYLKFN), and E134. An FAD-binding FR-type domain is found at 210-457 (PDGWTATLVG…RKPVLSPIHG (248 aa)). FAD contacts are provided by residues R358, 388–391 (RDFS), and 429–432 (GLCS). Residues T472, 528–529 (SR), and 534–538 (KIYVQ) contribute to the NADP(+) site. Position 603 (W603) interacts with FAD.

This sequence belongs to the NADPH-dependent diflavin oxidoreductase NDOR1 family. It in the N-terminal section; belongs to the flavodoxin family. The protein in the C-terminal section; belongs to the flavoprotein pyridine nucleotide cytochrome reductase family. Interacts with DRE2; as part of the cytosolic iron-sulfur (Fe-S) protein assembly (CIA) machinery. FAD is required as a cofactor. FMN serves as cofactor.

The protein localises to the cytoplasm. It localises to the mitochondrion. It catalyses the reaction 2 oxidized [2Fe-2S]-[protein] + NADPH = 2 reduced [2Fe-2S]-[protein] + NADP(+) + H(+). Functionally, NADPH-dependent reductase which is a central component of the cytosolic iron-sulfur (Fe-S) protein assembly (CIA) machinery. Transfers electrons from NADPH via its FAD and FMN prosthetic groups to the [2Fe-2S] cluster of DRE2, another key component of the CIA machinery. In turn, this reduced cluster provides electrons for assembly of cytosolic iron-sulfur cluster proteins. Positively controls H(2)O(2)-induced cell death. The sequence is that of NADPH-dependent diflavin oxidoreductase 1 from Gibberella zeae (strain ATCC MYA-4620 / CBS 123657 / FGSC 9075 / NRRL 31084 / PH-1) (Wheat head blight fungus).